Consider the following 323-residue polypeptide: Beta-ketoacyl-[acyl-carrier-protein] synthase III (323 aa).

Residues Cys114 and His250 contribute to the active site. Positions Gln251–Arg255 are ACP-binding. Residue Asn280 is part of the active site.

This sequence belongs to the thiolase-like superfamily. FabH family. As to quaternary structure, homodimer.

It is found in the cytoplasm. The catalysed reaction is malonyl-[ACP] + acetyl-CoA + H(+) = 3-oxobutanoyl-[ACP] + CO2 + CoA. It functions in the pathway lipid metabolism; fatty acid biosynthesis. Its function is as follows. Catalyzes the condensation reaction of fatty acid synthesis by the addition to an acyl acceptor of two carbons from malonyl-ACP. Catalyzes the first condensation reaction which initiates fatty acid synthesis and may therefore play a role in governing the total rate of fatty acid production. Possesses both acetoacetyl-ACP synthase and acetyl transacylase activities. Its substrate specificity determines the biosynthesis of branched-chain and/or straight-chain of fatty acids. This chain is Beta-ketoacyl-[acyl-carrier-protein] synthase III, found in Rhodospirillum centenum (strain ATCC 51521 / SW).